Here is a 73-residue protein sequence, read N- to C-terminus: Pelophylaxin-1 (73 aa).

The first 22 residues, 1 to 22 (MFTMKKSLLLVFFLGTIALSLC), serve as a signal peptide directing secretion. Positions 23-41 (EEERGADDDNGGEITDEEI) are excised as a propeptide. Cysteines 67 and 73 form a disulfide.

As to expression, expressed by the skin glands.

The protein resides in the secreted. In terms of biological role, antimicrobial peptide. This chain is Pelophylaxin-1, found in Pelophylax fukienensis (Fukien gold-striped pond frog).